The chain runs to 284 residues: Pantothenate synthetase (284 aa).

30–37 (MGNLHDGH) lines the ATP pocket. The Proton donor role is filled by His37. Position 61 (Gln61) interacts with (R)-pantoate. Gln61 contributes to the beta-alanine binding site. 149 to 152 (GEKD) contributes to the ATP binding site. Gln155 serves as a coordination point for (R)-pantoate. Residues Ile178 and 186-189 (LSSR) contribute to the ATP site.

It belongs to the pantothenate synthetase family. Homodimer.

Its subcellular location is the cytoplasm. The catalysed reaction is (R)-pantoate + beta-alanine + ATP = (R)-pantothenate + AMP + diphosphate + H(+). Its pathway is cofactor biosynthesis; (R)-pantothenate biosynthesis; (R)-pantothenate from (R)-pantoate and beta-alanine: step 1/1. Its function is as follows. Catalyzes the condensation of pantoate with beta-alanine in an ATP-dependent reaction via a pantoyl-adenylate intermediate. In Salmonella newport (strain SL254), this protein is Pantothenate synthetase.